The following is a 465-amino-acid chain: ATP synthase subunit beta (465 aa).

152-159 (GGAGVGKT) is a binding site for ATP.

This sequence belongs to the ATPase alpha/beta chains family. In terms of assembly, F-type ATPases have 2 components, CF(1) - the catalytic core - and CF(0) - the membrane proton channel. CF(1) has five subunits: alpha(3), beta(3), gamma(1), delta(1), epsilon(1). CF(0) has three main subunits: a(1), b(2) and c(9-12). The alpha and beta chains form an alternating ring which encloses part of the gamma chain. CF(1) is attached to CF(0) by a central stalk formed by the gamma and epsilon chains, while a peripheral stalk is formed by the delta and b chains.

The protein resides in the cell membrane. It carries out the reaction ATP + H2O + 4 H(+)(in) = ADP + phosphate + 5 H(+)(out). Functionally, produces ATP from ADP in the presence of a proton gradient across the membrane. The catalytic sites are hosted primarily by the beta subunits. This chain is ATP synthase subunit beta, found in Desulfitobacterium hafniense (strain Y51).